Here is a 34-residue protein sequence, read N- to C-terminus: Cytochrome c oxidase polypeptide 2A (34 aa).

Position 1 is an N-formylmethionine (methionine 1). Residues 4–34 (KPKGALAVILVLTLTILVFWLGVYAVFFARG) form a helical membrane-spanning segment.

It is found in the cell membrane. The catalysed reaction is 4 Fe(II)-[cytochrome c] + O2 + 8 H(+)(in) = 4 Fe(III)-[cytochrome c] + 2 H2O + 4 H(+)(out). In Thermus thermophilus (strain ATCC 27634 / DSM 579 / HB8), this protein is Cytochrome c oxidase polypeptide 2A (cbaD).